Here is a 177-residue protein sequence, read N- to C-terminus: Large ribosomal subunit protein uL6 (177 aa).

It belongs to the universal ribosomal protein uL6 family. Part of the 50S ribosomal subunit.

In terms of biological role, this protein binds to the 23S rRNA, and is important in its secondary structure. It is located near the subunit interface in the base of the L7/L12 stalk, and near the tRNA binding site of the peptidyltransferase center. The protein is Large ribosomal subunit protein uL6 of Polynucleobacter asymbioticus (strain DSM 18221 / CIP 109841 / QLW-P1DMWA-1) (Polynucleobacter necessarius subsp. asymbioticus).